The primary structure comprises 133 residues: Small ribosomal subunit protein uS8 (133 aa).

It belongs to the universal ribosomal protein uS8 family. Part of the 30S ribosomal subunit. Contacts proteins S5 and S12.

Functionally, one of the primary rRNA binding proteins, it binds directly to 16S rRNA central domain where it helps coordinate assembly of the platform of the 30S subunit. The protein is Small ribosomal subunit protein uS8 of Anaplasma phagocytophilum (strain HZ).